A 328-amino-acid polypeptide reads, in one-letter code: Coiled-coil domain-containing protein 54 (328 aa).

The stretch at Thr-122–Arg-151 forms a coiled coil. A Phosphothreonine modification is found at Thr-182. Over residues Thr-186–Lys-197 the composition is skewed to basic and acidic residues. The disordered stretch occupies residues Thr-186–Thr-205.

This Macaca fascicularis (Crab-eating macaque) protein is Coiled-coil domain-containing protein 54 (CCDC54).